Here is a 282-residue protein sequence, read N- to C-terminus: Probable septum site-determining protein MinC (282 aa).

A disordered region spans residues Ser-103–Ala-147. The span at Gln-104–Lys-120 shows a compositional bias: basic and acidic residues.

The protein belongs to the MinC family. In terms of assembly, interacts with MinD and FtsZ.

Cell division inhibitor that blocks the formation of polar Z ring septums. Rapidly oscillates between the poles of the cell to destabilize FtsZ filaments that have formed before they mature into polar Z rings. Prevents FtsZ polymerization. In Cupriavidus metallidurans (strain ATCC 43123 / DSM 2839 / NBRC 102507 / CH34) (Ralstonia metallidurans), this protein is Probable septum site-determining protein MinC.